The following is a 477-amino-acid chain: Solute carrier family 2, facilitated glucose transporter member 8 (477 aa).

Residues 1 to 25 (MSPEDPQETQPLLRPPEARTPRGRR) lie on the Cytoplasmic side of the membrane. The short motif at 12 to 13 (LL) is the Dileucine internalization motif element. Residues 26–46 (VFLASFAAALGPLSFGFALGY) form a helical membrane-spanning segment. Topologically, residues 47–70 (SSPAIPSLRRTAPPALRLGDNAAS) are extracellular. The helical transmembrane segment at 71–91 (WFGAVVTLGAAAGGILGGWLL) threads the bilayer. Residues 92–96 (DRAGR) are Cytoplasmic-facing. A helical membrane pass occupies residues 97–117 (KLSLLLCTVPFVTGFAVITAA). At 118 to 127 (RDVWMLLGGR) the chain is on the extracellular side. The chain crosses the membrane as a helical span at residues 128–148 (LLTGLACGVASLVAPVYISEI). Topologically, residues 149-156 (AYPAVRGL) are cytoplasmic. Residues 157–177 (LGSCVQLMVVTGILLAYVAGW) traverse the membrane as a helical segment. Gln162 contacts D-glucose. Residues 178–182 (VLEWR) lie on the Extracellular side of the membrane. Residues 183–203 (WLAVLGCVPPTLMLLLMCYMP) form a helical membrane-spanning segment. Over 204-257 (ETPRFLLTQHQYQEAMAALRFLWGSEEGWEEPPVGAEHQGFQLALLRRPGIYKP) the chain is Cytoplasmic. A helical transmembrane segment spans residues 258 to 278 (LIIGISLMVFQQLSGVNAIMF). D-glucose contacts are provided by residues 268–269 (QQ) and Asn274. Topologically, residues 279–293 (YANSIFEEAKFKDSS) are extracellular. Residues 294–314 (LASVTVGIIQVLFTAVAALIM) form a helical membrane-spanning segment. At 315–320 (DRAGRR) the chain is on the cytoplasmic side. A helical transmembrane segment spans residues 321 to 341 (LLLALSGVIMVFSMSAFGTYF). The Extracellular portion of the chain corresponds to 342–367 (KLTQSLPSNSSHVGLVPIAAEPVDVQ). Asn350 is a glycosylation site (N-linked (GlcNAc...) asparagine). Residues 368 to 388 (VGLAWLAVGSMCLFIAGFAVG) traverse the membrane as a helical segment. At 389-404 (WGPIPWLLMSEIFPLH) the chain is on the cytoplasmic side. Trp394 is a D-glucose binding site. A helical transmembrane segment spans residues 405-425 (VKGVATGICVLTNWFMAFLVT). Residues 426–438 (KEFSSVMEMLRPY) are Extracellular-facing. The chain crosses the membrane as a helical span at residues 439 to 459 (GAFWLTAAFCALSVLFTLTVV). Topologically, residues 460 to 477 (PETKGRTLEQVTAHFEGR) are cytoplasmic.

Belongs to the major facilitator superfamily. Sugar transporter (TC 2.A.1.1) family. Glucose transporter subfamily. In terms of assembly, interacts with AP2B1. Also able to mediate the transport of dehydroascorbate. As to expression, highest level of expression in placenta and testis. Highly expressed in adult and pubertal testis, but not prepubertal testis. Lower levels of expression in brain, liver, heart, kidney, fat and skeletal muscle.

The protein resides in the cell membrane. Its subcellular location is the cytoplasmic vesicle membrane. It catalyses the reaction D-glucose(out) = D-glucose(in). The catalysed reaction is D-fructose(out) = D-fructose(in). The enzyme catalyses L-dehydroascorbate(out) = L-dehydroascorbate(in). It carries out the reaction alpha,alpha-trehalose(in) = alpha,alpha-trehalose(out). Its activity is regulated as follows. Inhibited by cytochalasin B. Its function is as follows. Insulin-regulated facilitative hexose transporter that mediates the transport of glucose and fructose. Facilitates hepatic influx of dietary trehalose, which in turn inhibits glucose and fructose influx triggering a starvation signal and hepatic autophagy through activation of AMPK and ULK1. Also able to mediate the transport of dehydroascorbate. This chain is Solute carrier family 2, facilitated glucose transporter member 8, found in Mus musculus (Mouse).